The chain runs to 839 residues: DNA (cytosine-5)-methyltransferase CMT3 (839 aa).

Disordered stretches follow at residues 1–38 (MAPK…EPVT) and 51–86 (LDEP…KTKD). A compositionally biased stretch (basic residues) spans 19–30 (PKPKKRAPKRAK). The span at 51 to 70 (LDEPIPESEAKSTWPDRYKP) shows a compositional bias: basic and acidic residues. Positions 108–227 (QIYELNDDAY…LPYDTFEAIQ (120 aa)) constitute a BAH domain. In terms of domain architecture, SAM-dependent MTase C5-type spans 269 to 813 (ATLLDLYSGC…YALGTAFQGL (545 aa)). The 66-residue stretch at 382 to 447 (FTVDKIVGIS…LGYKSGILPL (66 aa)) folds into the Chromo domain. Residue C460 is part of the active site.

This sequence belongs to the class I-like SAM-binding methyltransferase superfamily. C5-methyltransferase family. In terms of assembly, homodimer. Interacts with HP1 and, through its chromodomain, with the N-terminal tail of histone H3 doubly methylated at 'Lys-9' and 'Lys-27'. Binds to JMJ24. Post-translationally, ubiquitinated by JMJ24, subsequently beingargeted to proteasomal degradation thus initiating the destabilization of the heterochromatic state of endogenous silenced loci.

The protein resides in the nucleus. It catalyses the reaction a 2'-deoxycytidine in DNA + S-adenosyl-L-methionine = a 5-methyl-2'-deoxycytidine in DNA + S-adenosyl-L-homocysteine + H(+). Its function is as follows. Involved in the CpXpG methylation (e.g. CHG cytosine) and in gene silencing. Methylates preferentially transposon-related sequences. Functionally redundant to DRM1/DRM2 to maintain non-CpG methylation. Involved in RNA-directed DNA methylation. The protein is DNA (cytosine-5)-methyltransferase CMT3 of Arabidopsis thaliana (Mouse-ear cress).